The primary structure comprises 922 residues: Two-component sensor PprA (922 aa).

Positions 1-10 are enriched in low complexity; the sequence is MFEFSRSSSA. The segment at 1-22 is disordered; that stretch reads MFEFSRSSSAEAERPEPFSQEG. Positions 506–558 constitute a PAC 1 domain; it reads VKTRYRLADGQGNWHWLYDEAKLLRDAQGLPSEAVGLWLDVTEQHLAAQRIAE. Positions 559-622 constitute a PAS domain; that stretch reads SEERYRVLVE…EDASALRARL (64 aa). The region spanning 632–684 is the PAC 2 domain; sequence EVPELRFNLPGQRFLWLVWAERPLFDARGELCEVQAVGRDNTPVRRAQQQLAQ. One can recognise a Histidine kinase domain in the interval 697-916; the sequence is GLAHEVKQPL…LFVVRLPLAA (220 aa). The residue at position 700 (His700) is a Phosphohistidine; by autocatalysis.

Post-translationally, autophosphorylated.

It catalyses the reaction ATP + protein L-histidine = ADP + protein N-phospho-L-histidine.. Its function is as follows. Member of the two-component regulatory system PprA/PprB involved in biofilm formation by controlling the expression of many related genes including type IVb pili major subunit flp pilin, adhesin bapA or cupE fimbriae. Functions as a heme sensor histidine kinase which is autophosphorylated at a histidine residue and transfers its phosphate group to PprB. This chain is Two-component sensor PprA, found in Pseudomonas aeruginosa (strain ATCC 15692 / DSM 22644 / CIP 104116 / JCM 14847 / LMG 12228 / 1C / PRS 101 / PAO1).